The chain runs to 339 residues: Casein kinase II subunit alpha' (339 aa).

Positions 50–334 (YEIINKIGRG…AKEAMDHKFF (285 aa)) constitute a Protein kinase domain. Residues 56–64 (IGRGKYSEV) and lysine 79 contribute to the ATP site. The Proton acceptor role is filled by aspartate 167.

Belongs to the protein kinase superfamily. Ser/Thr protein kinase family. CK2 subfamily. As to quaternary structure, tetramer composed of an alpha chain, an alpha', one beta chain and one beta' chain. Interacts with FACT subunits POB3 and SPT16. Interacts with NAP1. Interacts with YTA7.

It carries out the reaction L-seryl-[protein] + ATP = O-phospho-L-seryl-[protein] + ADP + H(+). The catalysed reaction is L-threonyl-[protein] + ATP = O-phospho-L-threonyl-[protein] + ADP + H(+). Functionally, catalytic subunit of a constitutively active serine/threonine-protein kinase complex that phosphorylates a large number of substrates containing acidic residues C-terminal to the phosphorylated serine or threonine. Phosphorylates YTA7 during S-phase to promote transcription of histones. The protein is Casein kinase II subunit alpha' of Saccharomyces cerevisiae (strain ATCC 204508 / S288c) (Baker's yeast).